Reading from the N-terminus, the 1694-residue chain is Immunoglobulin A1 protease autotransporter (1694 aa).

Residues 1 to 25 (MLNKKFKLNFIALTVAYALTPYTEA) form the signal peptide. Positions 26–332 (ALVRDDVDYQ…NIYKPEFAKT (307 aa)) constitute a Peptidase S6 domain. Ser-288 is an active-site residue. Positions 991 to 1403 (VEKRNQTVDT…GSDRSTVALR (413 aa)) are disordered. The segment covering 997–1021 (TVDTTNITTPNNIQADVPSVPSNNE) has biased composition (polar residues). Low complexity predominate over residues 1037–1047 (TPSETTETVAE). Basic and acidic residues predominate over residues 1049–1061 (SKQESKTVEKNEQ). The segment covering 1082-1095 (KANTQTNEVAQSGS) has biased composition (polar residues). 2 stretches are compositionally biased toward basic and acidic residues: residues 1104-1124 (EIKETAKVEKEEKAKVEKDEI) and 1142-1154 (APKEVSTDTKVEE). Composition is skewed to polar residues over residues 1155–1178 (TQVQAQPQTQSTTVAAAEATSPNS) and 1199–1210 (VSKNQTENTTDQ). Residues 1211–1226 (PTEREKTAKVETEKTQ) are compositionally biased toward basic and acidic residues. 3 stretches are compositionally biased toward polar residues: residues 1227–1247 (EPPQVASQASPKQEQSETVQP), 1255–1297 (NVPT…TAIT), and 1308–1336 (TETAASTEDASQHKANTVADNSVANNSES). Positions 1352–1370 (ETSAEETTAASTDETTIAD) are enriched in low complexity. A compositionally biased stretch (basic residues) spans 1374–1384 (RSKPNRRSRRS). The Autotransporter domain maps to 1442–1694 (NNEGQYNVWV…TAELKLSFSF (253 aa)).

It is found in the periplasm. Its subcellular location is the secreted. The protein localises to the cell surface. The protein resides in the cell outer membrane. The enzyme catalyses Cleavage of immunoglobulin A molecules at certain Pro-|-Xaa bonds in the hinge region. No small molecule substrates are known.. Its function is as follows. Virulence factor; cleaves host immunoglobulin A producing intact Fc and Fab fragments. The protein is Immunoglobulin A1 protease autotransporter (iga) of Haemophilus influenzae (strain ATCC 51907 / DSM 11121 / KW20 / Rd).